A 191-amino-acid polypeptide reads, in one-letter code: Decorin-binding protein A (191 aa).

The N-terminal stretch at 1-29 (MIKCNNKTFNNLLKLTILVNLLISCGLTG) is a signal peptide.

It belongs to the decorin-binding protein family.

Binds to decorin which may mediate the adherence of B.burgdorferi to collagen fibers in skin and other tissues. This Borreliella burgdorferi (strain ATCC 35210 / DSM 4680 / CIP 102532 / B31) (Borrelia burgdorferi) protein is Decorin-binding protein A (dbpA).